Reading from the N-terminus, the 122-residue chain is Large ribosomal subunit protein bL17 (122 aa).

It belongs to the bacterial ribosomal protein bL17 family. As to quaternary structure, part of the 50S ribosomal subunit. Contacts protein L32.

This chain is Large ribosomal subunit protein bL17, found in Neisseria meningitidis serogroup C / serotype 2a (strain ATCC 700532 / DSM 15464 / FAM18).